A 124-amino-acid polypeptide reads, in one-letter code: Fluoride-specific ion channel FluC 2 (124 aa).

4 helical membrane-spanning segments follow: residues Leu8–Val28, Asn34–Phe54, Leu60–Cys80, and Leu93–Ile113. Na(+) is bound by residues Gly68 and Thr71.

It belongs to the fluoride channel Fluc/FEX (TC 1.A.43) family.

It is found in the cell inner membrane. It catalyses the reaction fluoride(in) = fluoride(out). Na(+) is not transported, but it plays an essential structural role and its presence is essential for fluoride channel function. In terms of biological role, fluoride-specific ion channel. Important for reducing fluoride concentration in the cell, thus reducing its toxicity. In Prochlorococcus marinus (strain MIT 9313), this protein is Fluoride-specific ion channel FluC 2.